A 523-amino-acid polypeptide reads, in one-letter code: Sporulation protein 23 (523 aa).

In terms of assembly, interacts with SPO1 in meiosis.

Functionally, regulates expression of PIS1. This chain is Sporulation protein 23 (SPO23), found in Saccharomyces cerevisiae (strain ATCC 204508 / S288c) (Baker's yeast).